A 712-amino-acid chain; its full sequence is Copper amine oxidase 1 (712 aa).

Alanine 319–leucine 330 provides a ligand contact to substrate. Residue aspartate 321 is the Proton acceptor of the active site. Cysteine 340 and cysteine 366 form a disulfide bridge. Residue alanine 404–tyrosine 409 participates in substrate binding. The Schiff-base intermediate with substrate; via topaquinone role is filled by tyrosine 407. 2',4',5'-topaquinone is present on tyrosine 407. Histidine 458 and histidine 460 together coordinate Cu cation. Positions 616 and 617 each coordinate Mn(2+). Residue histidine 627 coordinates Cu cation.

It belongs to the copper/topaquinone oxidase family. As to quaternary structure, homodimer. Cu cation is required as a cofactor. It depends on Zn(2+) as a cofactor. Requires L-topaquinone as cofactor. The cofactor is Mn(2+). Topaquinone (TPQ) is generated by copper-dependent autoxidation of a specific tyrosyl residue.

It localises to the cytoplasm. It catalyses the reaction a primary methyl amine + O2 + H2O = an aldehyde + H2O2 + NH4(+). Copper amine oxidase involved in the metabolism of xenobiotic and biogenic amines. Capable of catalyzing the oxidative deamination of primary amines such as ethylamine as alternate sources of nitrogen to support growth. This Schizosaccharomyces pombe (strain 972 / ATCC 24843) (Fission yeast) protein is Copper amine oxidase 1 (cao1).